Here is a 1089-residue protein sequence, read N- to C-terminus: PALM2-AKAP2 fusion protein (1089 aa).

The stretch at 70-107 (SEEDEFKVKQLEDNIQRLEQEIQALESEESQISAKEQI) forms a coiled coil. Disordered stretches follow at residues 165 to 194 (SEDANQLRSKQDNCGDSRLEPAASSLSPDH), 210 to 231 (PGVTSTPHSKDHSSPFYSPSHN), and 289 to 362 (PAHS…SRDG). The segment covering 173 to 183 (SKQDNCGDSRL) has biased composition (basic and acidic residues). 2 positions are modified to phosphoserine: Arg315 and Ser318. Residues 317 to 328 (PSDRMAEGERAN) show a composition bias toward basic and acidic residues. Residues 329-347 (GHSTDQPQDLLGNSLQAPA) show a composition bias toward polar residues. Residue Ser348 is modified to Phosphoserine. Residues 348 to 357 (SPSSSTSSHC) are compositionally biased toward low complexity. A Glycyl lysine isopeptide (Lys-Gly) (interchain with G-Cter in SUMO1); alternate cross-link involves residue Lys370. Lys370 participates in a covalent cross-link: Glycyl lysine isopeptide (Lys-Gly) (interchain with G-Cter in SUMO2); alternate. The tract at residues 429–517 (KNPGIAAKWW…LSTSQPCTAP (89 aa)) is disordered. Residues 455 to 470 (LESHRKYKERKEKRAQ) are compositionally biased toward basic and acidic residues. A compositionally biased stretch (low complexity) spans 471–508 (QEQLQLQQQQQQQLQQQQLQQQQLQQQQLQQQLQQQQL). At Ser553 the chain carries Phosphoserine. The disordered stretch occupies residues 592–644 (TVGGTLEDGGTQAAKEQKAPCVSESQSAGAGPANAATQGKEGPYSEPSKRGPL). 3 positions are modified to phosphoserine: Ser678, Ser682, and Ser734. Positions 712–749 (FSMDNISDSGASNETPSALQENSLADFSLPQTPQTDNP) are enriched in polar residues. Disordered regions lie at residues 712 to 783 (FSMD…DPLE), 800 to 899 (EQVD…YFSK), and 915 to 934 (TQESDVMVGPFKLRSRKQRT). Thr743 bears the Phosphothreonine mark. Positions 782 to 795 (LEYQAGLLVQNAIQ) are PKA-RII subunit binding domain. Residues 801 to 814 (QVDKAEAHTSKEGS) are compositionally biased toward basic and acidic residues. At Ser847 the chain carries Phosphoserine. The span at 850–871 (QEKRDILPKNLPAEDRALREKG) shows a compositional bias: basic and acidic residues. Residues 928–958 (RSRKQRTLSMIEEEIRAAQEREEELKRQRQV) adopt a coiled-coil conformation. A phosphoserine mark is found at Ser936, Ser964, Ser995, and Ser1002. The interval 946-1021 (QEREEELKRQ…AAGTQRPKNL (76 aa)) is disordered.

As to expression, highly expressed in lung and weakly in thymus and cerebellum. Little or no expression in liver, heart and cerebral cortex. All isoforms are expressed in lung, but KL2A and KL2B isoforms are the principal isoforms in cerebellum.

It is found in the apical cell membrane. Binds to regulatory subunit (RII) of protein kinase A. May be involved in establishing polarity in signaling systems or in integrating PKA-RII isoforms with downstream effectors to capture, amplify and focus diffuse, trans-cellular signals carried by cAMP. Binds tp and modulates the structure of the actin cytoskeleton. This Mus musculus (Mouse) protein is PALM2-AKAP2 fusion protein.